Reading from the N-terminus, the 50-residue chain is U-megalopygitoxin(9)-Mo13 (50 aa).

Residues 1-23 (MKLVFLFFIVAVMVSLFVGMTEA) form the signal peptide. A disulfide bond links Cys33 and Cys40.

The protein belongs to the caterpillar 9 family. Expressed by the venom apparatus.

Its subcellular location is the secreted. Its function is as follows. Probable toxin. In Megalopyge opercularis (Southern flannel moth), this protein is U-megalopygitoxin(9)-Mo13.